The sequence spans 600 residues: MAGEGQRAEPEREGWALYVTPRAPLREGRPRLAPQNGGSGDVPAYGTPTPSRHGRREVRFSEEPPEVYGDFEPRAAKEKARVGRQIPLEGFRPDSAKEEVRESAYYLRSRQRRQPRLHEAEEMQTRRAALLQQQPHSPPPPLRPSPVTTRRGLRDSHSSEEDEPPSQTVLSQTVTKKAIRRTQETPVMSEDPLISLRRPPLRSSRSEAASVQQKVNFLEEGETEENDQDSFDSDVTVKVRSGDSVESGDQTTRSSSQYKESFWQSSQSGDFTAFDEQPLKLSSGYQKTPQEWAEKTVRIRTRMLTSSPGMRSIYGSFSDDDSVQKSELGNQSPSTSNQQMTGQPKSVSSVKTKRYWPFAVIAALLIGGFLYTRPPEAETTAVQEFQNQMKQLMNKYQGQDEKLWKRSQTFLEKHLNGSQSRPQPAILLLTAARDAEEALRCLSEQIADAYSSFRSVPAIRIDGASKATRDSDTVKEEVDQELSNGFRNGQNAAVVHRFESLPAGSTLIFYKYCDHESAAFKDVALVLTVLLEEETLGTSLGLKEIEEKVRDFLQVKFTNSDTPNSYKHMDPDKLSGLWSRISHLVLPVQPENDLKKGICL.

Residues 1 to 14 (MAGEGQRAEPEREG) are compositionally biased toward basic and acidic residues. 2 disordered regions span residues 1–261 (MAGE…YKES) and 310–346 (MRSIYGSFSDDDSVQKSELGNQSPSTSNQQMTGQPKS). At 1-354 (MAGEGQRAEP…KSVSSVKTKR (354 aa)) the chain is on the nuclear side. Phosphoserine is present on S61. Composition is skewed to basic and acidic residues over residues 71–81 (FEPRAAKEKAR), 91–102 (FRPDSAKEEVRE), and 116–125 (RLHEAEEMQT). 6 positions are modified to phosphoserine: S137, S145, S156, S158, S159, and S189. Low complexity predominate over residues 192–203 (PLISLRRPPLRS). The span at 219–232 (EEGETEENDQDSFD) shows a compositional bias: acidic residues. The residue at position 223 (T223) is a Phosphothreonine. A phosphoserine mark is found at S230, S233, and S244. Polar residues predominate over residues 247 to 261 (SGDQTTRSSSQYKES). The residue at position 322 (S322) is a Phosphoserine. K325 participates in a covalent cross-link: Glycyl lysine isopeptide (Lys-Gly) (interchain with G-Cter in SUMO2). A compositionally biased stretch (polar residues) spans 325 to 346 (KSELGNQSPSTSNQQMTGQPKS). A Phosphoserine modification is found at S332. Residues 355 to 371 (YWPFAVIAALLIGGFLY) form a helical membrane-spanning segment. Residues 372 to 600 (TRPPEAETTA…ENDLKKGICL (229 aa)) lie on the Perinuclear space side of the membrane. The tract at residues 373-600 (RPPEAETTAV…ENDLKKGICL (228 aa)) is interaction with TOR1A. The stretch at 376-452 (EAETTAVQEF…SEQIADAYSS (77 aa)) forms a coiled coil. N416 carries an N-linked (GlcNAc...) asparagine glycan.

Belongs to the TOR1AIP family. As to quaternary structure, interacts with ATP1B4. Interacts with TOR1A (ATP-bound). Interacts with TOR1B, TOR2A and TOR3A. Interacts with VIM.

It localises to the nucleus inner membrane. Its function is as follows. Required for nuclear membrane integrity. Induces TOR1A and TOR1B ATPase activity and is required for their location on the nuclear membrane. Binds to A- and B-type lamins. Possible role in membrane attachment and assembly of the nuclear lamina. In Bos taurus (Bovine), this protein is Torsin-1A-interacting protein 1 (TOR1AIP1).